A 790-amino-acid polypeptide reads, in one-letter code: MRMLRWLILSAFSVAGAVQAQGNQDSAAASAPSASIGAPVLRTSPGLRVHRLPDEKIPAFMEADQISGDPDSEVTLTGNAQVRRVDGIIKGDRINYRRDTGDVDVQGSARMLRDGTLITGPSARLNVDTYSGEIQEPNFWIGASGGTAQARHADIFSKSQMRLSQVTYSGCPCPKPSWYIKADTVDLDFDENEGVARNGVLYFKDVPILASPYLTFPVKKERKSGFLMPTYGTTSNSGFDISLPYYFNLAPNYDLTLVPRYLSKRGAQLGGEFRYLGSGYRGVAIGTYLPDDNETGRDRWMYRTYHRQLLGNGFYTDWDIAGASDDNYFRDISELGLNTASTTYLPRRGRVGWSSTYWQTYAQVYKYQTLQDPDAPLAPPYDKVPELWLKGARYDWGGFDAEWVSTAVRFQRPLLNGRRLGPDGDRLQTYPTVSYPIVRPGWFLVPKVGVHYTQYRTDWYNRDWNRIGLSNYKRTESRTVPIMSLDAGMIFERDASLFGKAATQTLEPRLYYLRVPYRDQSALPVYDTTLADFSFDQAFQENIYTGGWDRIANANQLTAALTTRWLDANTGFERLSLSAAQRIYFQDQEVTLPAEQPRKNVRSDFLVGATAALTDTLTTDVAAQYNPYDNKWSRGMVSARWSPQRLTTVAVAYRYQRDPLPGISYQPQGQNQVSLAVQWPIHRRWYGVGRVDYSLRSEPATAAAAEQSPRVTQAIAGLEYKGDCCWVGRVVYQRYAVSAADTNTALFFQLELTGLGALGTDPISLLNRSIPGYQSVVPPTPTGTTFERYE.

Residues 1–20 (MRMLRWLILSAFSVAGAVQA) form the signal peptide.

It belongs to the LptD family. Component of the lipopolysaccharide transport and assembly complex. Interacts with LptE and LptA.

It localises to the cell outer membrane. Together with LptE, is involved in the assembly of lipopolysaccharide (LPS) at the surface of the outer membrane. The chain is LPS-assembly protein LptD from Bordetella bronchiseptica (strain ATCC BAA-588 / NCTC 13252 / RB50) (Alcaligenes bronchisepticus).